The following is a 107-amino-acid chain: uncharacterized protein (107 aa).

Residues 6-107 (KKVIEQILDN…QAQVETLLAA (102 aa)) enclose the Glutaredoxin domain. Lysine 23 is a binding site for glutathione. Residue cysteine 31 participates in [2Fe-2S] cluster binding. Residues arginine 60 and 85–86 (AD) each bind glutathione.

It belongs to the glutaredoxin family. Monothiol subfamily.

It localises to the plastid. Its subcellular location is the chloroplast. This is an uncharacterized protein from Porphyra purpurea (Red seaweed).